A 609-amino-acid chain; its full sequence is Dihydroxy-acid dehydratase (609 aa).

Aspartate 81 is a Mg(2+) binding site. Position 122 (cysteine 122) interacts with [2Fe-2S] cluster. Mg(2+) contacts are provided by aspartate 123 and lysine 124. Lysine 124 bears the N6-carboxylysine mark. Cysteine 195 contributes to the [2Fe-2S] cluster binding site. Glutamate 491 contacts Mg(2+). Serine 517 acts as the Proton acceptor in catalysis.

Belongs to the IlvD/Edd family. Homodimer. [2Fe-2S] cluster is required as a cofactor. The cofactor is Mg(2+).

It carries out the reaction (2R)-2,3-dihydroxy-3-methylbutanoate = 3-methyl-2-oxobutanoate + H2O. The catalysed reaction is (2R,3R)-2,3-dihydroxy-3-methylpentanoate = (S)-3-methyl-2-oxopentanoate + H2O. It functions in the pathway amino-acid biosynthesis; L-isoleucine biosynthesis; L-isoleucine from 2-oxobutanoate: step 3/4. Its pathway is amino-acid biosynthesis; L-valine biosynthesis; L-valine from pyruvate: step 3/4. Functions in the biosynthesis of branched-chain amino acids. Catalyzes the dehydration of (2R,3R)-2,3-dihydroxy-3-methylpentanoate (2,3-dihydroxy-3-methylvalerate) into 2-oxo-3-methylpentanoate (2-oxo-3-methylvalerate) and of (2R)-2,3-dihydroxy-3-methylbutanoate (2,3-dihydroxyisovalerate) into 2-oxo-3-methylbutanoate (2-oxoisovalerate), the penultimate precursor to L-isoleucine and L-valine, respectively. The chain is Dihydroxy-acid dehydratase from Acinetobacter baumannii (strain AB0057).